Consider the following 174-residue polypeptide: Crossover junction endodeoxyribonuclease RuvC (174 aa).

Residues Asp-8, Glu-69, and Asp-141 contribute to the active site. Residues Asp-8, Glu-69, and Asp-141 each contribute to the Mg(2+) site.

The protein belongs to the RuvC family. In terms of assembly, homodimer which binds Holliday junction (HJ) DNA. The HJ becomes 2-fold symmetrical on binding to RuvC with unstacked arms; it has a different conformation from HJ DNA in complex with RuvA. In the full resolvosome a probable DNA-RuvA(4)-RuvB(12)-RuvC(2) complex forms which resolves the HJ. It depends on Mg(2+) as a cofactor.

It is found in the cytoplasm. It catalyses the reaction Endonucleolytic cleavage at a junction such as a reciprocal single-stranded crossover between two homologous DNA duplexes (Holliday junction).. Its function is as follows. The RuvA-RuvB-RuvC complex processes Holliday junction (HJ) DNA during genetic recombination and DNA repair. Endonuclease that resolves HJ intermediates. Cleaves cruciform DNA by making single-stranded nicks across the HJ at symmetrical positions within the homologous arms, yielding a 5'-phosphate and a 3'-hydroxyl group; requires a central core of homology in the junction. The consensus cleavage sequence is 5'-(A/T)TT(C/G)-3'. Cleavage occurs on the 3'-side of the TT dinucleotide at the point of strand exchange. HJ branch migration catalyzed by RuvA-RuvB allows RuvC to scan DNA until it finds its consensus sequence, where it cleaves and resolves the cruciform DNA. The protein is Crossover junction endodeoxyribonuclease RuvC of Xanthomonas axonopodis pv. citri (strain 306).